The chain runs to 227 residues: Protein CAP22 (227 aa).

Asparagine 55 and asparagine 72 each carry an N-linked (GlcNAc...) asparagine glycan. Residues 143 to 162 form a disordered region; that stretch reads TTIGGGATPAPTSERSRTSD.

Its subcellular location is the secreted. The protein localises to the cell wall. This is Protein CAP22 (CAP22) from Colletotrichum gloeosporioides (Anthracnose fungus).